A 244-amino-acid polypeptide reads, in one-letter code: Diablo homolog, mitochondrial (244 aa).

A mitochondrion-targeting transit peptide spans 1 to 38; the sequence is MASLPRRLIWSFSYILRESFPIVSRRNCVSLLRASWRK. Residues 50–54 carry the IAP-binding motif; that stretch reads AIPVG. Over residues 207–218 the composition is skewed to basic and acidic residues; the sequence is DEIKRTITEDKG. The disordered stretch occupies residues 207–244; sequence DEIKRTITEDKGNPPSGGSPRSSLSEEEEIPEAYLRED. The segment covering 220–229 has biased composition (low complexity); that stretch reads PPSGGSPRSS.

Belongs to the Smac/DIABLO protein family. As to quaternary structure, homodimer.

Its subcellular location is the mitochondrion. Promotes apoptosis. Acts by opposing the inhibitory activity of inhibitor of apoptosis proteins (IAP). This is Diablo homolog, mitochondrial from Xenopus tropicalis (Western clawed frog).